The primary structure comprises 324 residues: Adducin-related protein C1289.14 (324 aa).

It belongs to the aldolase class II family. Adducin subfamily.

In Schizosaccharomyces pombe (strain 972 / ATCC 24843) (Fission yeast), this protein is Adducin-related protein C1289.14.